The following is a 452-amino-acid chain: UDP-N-acetylmuramate--L-alanine ligase (452 aa).

119–125 contributes to the ATP binding site; the sequence is GAHGKTS.

Belongs to the MurCDEF family.

Its subcellular location is the cytoplasm. It carries out the reaction UDP-N-acetyl-alpha-D-muramate + L-alanine + ATP = UDP-N-acetyl-alpha-D-muramoyl-L-alanine + ADP + phosphate + H(+). It functions in the pathway cell wall biogenesis; peptidoglycan biosynthesis. Cell wall formation. This is UDP-N-acetylmuramate--L-alanine ligase from Streptococcus mutans serotype c (strain ATCC 700610 / UA159).